Consider the following 224-residue polypeptide: Ribonuclease 3 (224 aa).

An RNase III domain is found at 4–127; sequence IEKLEQSLTY…IIGAIHLEAG (124 aa). E40 serves as a coordination point for Mg(2+). D44 is an active-site residue. Positions 113 and 116 each coordinate Mg(2+). Residue E116 is part of the active site. The 70-residue stretch at 154–223 folds into the DRBM domain; the sequence is DYKTKLQEIT…AKIALEKLGA (70 aa).

The protein belongs to the ribonuclease III family. In terms of assembly, homodimer. The cofactor is Mg(2+).

It is found in the cytoplasm. It carries out the reaction Endonucleolytic cleavage to 5'-phosphomonoester.. Functionally, digests double-stranded RNA. Involved in the processing of primary rRNA transcript to yield the immediate precursors to the large and small rRNAs (23S and 16S). Processes some mRNAs, and tRNAs when they are encoded in the rRNA operon. Processes pre-crRNA and tracrRNA of type II CRISPR loci if present in the organism. In Campylobacter jejuni subsp. jejuni serotype O:6 (strain 81116 / NCTC 11828), this protein is Ribonuclease 3.